The primary structure comprises 368 residues: Queuine tRNA-ribosyltransferase (368 aa).

The Proton acceptor role is filled by D89. Residues 89-93 (DSGGF), D143, Q187, and G214 each bind substrate. D264 (nucleophile) is an active-site residue. The tract at residues 269 to 273 (TRNAR) is RNA binding; important for wobble base 34 recognition. Zn(2+) contacts are provided by C302, C304, C307, and H333.

The protein belongs to the queuine tRNA-ribosyltransferase family. In terms of assembly, homodimer. Within each dimer, one monomer is responsible for RNA recognition and catalysis, while the other monomer binds to the replacement base PreQ1. Zn(2+) is required as a cofactor.

It catalyses the reaction 7-aminomethyl-7-carbaguanine + guanosine(34) in tRNA = 7-aminomethyl-7-carbaguanosine(34) in tRNA + guanine. Its pathway is tRNA modification; tRNA-queuosine biosynthesis. In terms of biological role, catalyzes the base-exchange of a guanine (G) residue with the queuine precursor 7-aminomethyl-7-deazaguanine (PreQ1) at position 34 (anticodon wobble position) in tRNAs with GU(N) anticodons (tRNA-Asp, -Asn, -His and -Tyr). Catalysis occurs through a double-displacement mechanism. The nucleophile active site attacks the C1' of nucleotide 34 to detach the guanine base from the RNA, forming a covalent enzyme-RNA intermediate. The proton acceptor active site deprotonates the incoming PreQ1, allowing a nucleophilic attack on the C1' of the ribose to form the product. After dissociation, two additional enzymatic reactions on the tRNA convert PreQ1 to queuine (Q), resulting in the hypermodified nucleoside queuosine (7-(((4,5-cis-dihydroxy-2-cyclopenten-1-yl)amino)methyl)-7-deazaguanosine). The polypeptide is Queuine tRNA-ribosyltransferase (Blochmanniella pennsylvanica (strain BPEN)).